We begin with the raw amino-acid sequence, 155 residues long: uncharacterized protein (155 aa).

Residues 5 to 25 traverse the membrane as a helical segment; the sequence is GIIICVGIAFLIFIFLWAYFK.

It is found in the membrane. This is an uncharacterized protein from Acheta domesticus (House cricket).